The primary structure comprises 338 residues: POU domain, class 4, transcription factor 3 (338 aa).

A POU-IV box motif is present at residues 56–65; it reads RAEALAAVDI. Residues 91-112 are disordered; that stretch reads TSPTVPISHPAALTSHPHHPVH. Residues 179-256 enclose the POU-specific domain; that stretch reads DVESDPRELE…VLQAWLEEAE (78 aa). The segment at residues 274-333 is a DNA-binding region (homeobox); that stretch reads RKRKRTSIAAPEKRSLEAYFAIQPRPSSEKIAAIAEKLDLKKNVVRVWFCNQRQKQKRMK.

The protein belongs to the POU transcription factor family. Interacts with ISL1. Expressed in the chochlea of the inner ear.

Its subcellular location is the nucleus. It is found in the cytoplasm. Functionally, acts as a transcriptional activator. Acts by binding to sequences related to the consensus octamer motif 5'-ATGCAAAT-3' in the regulatory regions of its target genes. Involved in the auditory system development, required for terminal differentiation of hair cells in the inner ear. The sequence is that of POU domain, class 4, transcription factor 3 from Rattus norvegicus (Rat).